Consider the following 208-residue polypeptide: MSAEPLIAGVDEVGRGALFGPVVAAVVVTVPSGFARLWELGVKDSKQLSPQKRQKLSRQIQRDFVCRIGYATVKEIDRLNIFHASLLAMSRAIGKLPLSPSLCWVDGKHIIKDLSIPQKAVIQGDQQSPVIAAASIVAKVWRDDLITRWHRRYPDYGLARHKGYGTAQHLEAIGNYGLTSQHRLSFSPCQPRLEHDCRTICPRVIEIS.

The RNase H type-2 domain maps to 5–198; it reads PLIAGVDEVG…CQPRLEHDCR (194 aa). Residues Asp-11, Glu-12, and Asp-106 each coordinate a divalent metal cation.

Belongs to the RNase HII family. Mn(2+) is required as a cofactor. The cofactor is Mg(2+).

It localises to the cytoplasm. The enzyme catalyses Endonucleolytic cleavage to 5'-phosphomonoester.. Functionally, endonuclease that specifically degrades the RNA of RNA-DNA hybrids. This Microcystis aeruginosa (strain NIES-843 / IAM M-2473) protein is Ribonuclease HII.